The chain runs to 395 residues: ATP synthase subunit beta, chloroplastic (395 aa).

Residue 72 to 79 (GGAGVGKT) participates in ATP binding.

This sequence belongs to the ATPase alpha/beta chains family. In terms of assembly, F-type ATPases have 2 components, CF(1) - the catalytic core - and CF(0) - the membrane proton channel. CF(1) has five subunits: alpha(3), beta(3), gamma(1), delta(1), epsilon(1). CF(0) has four main subunits: a(1), b(1), b'(1) and c(9-12).

The protein localises to the plastid. It localises to the chloroplast thylakoid membrane. It carries out the reaction ATP + H2O + 4 H(+)(in) = ADP + phosphate + 5 H(+)(out). Produces ATP from ADP in the presence of a proton gradient across the membrane. The catalytic sites are hosted primarily by the beta subunits. This chain is ATP synthase subunit beta, chloroplastic, found in Blechnum occidentale (Hammock fern).